Here is a 339-residue protein sequence, read N- to C-terminus: Ribosomal RNA small subunit methyltransferase C (339 aa).

This sequence belongs to the methyltransferase superfamily. RsmC family. Monomer.

Its subcellular location is the cytoplasm. The catalysed reaction is guanosine(1207) in 16S rRNA + S-adenosyl-L-methionine = N(2)-methylguanosine(1207) in 16S rRNA + S-adenosyl-L-homocysteine + H(+). Specifically methylates the guanine in position 1207 of 16S rRNA in the 30S particle. The chain is Ribosomal RNA small subunit methyltransferase C from Aliivibrio fischeri (strain MJ11) (Vibrio fischeri).